The sequence spans 761 residues: Neurotrypsin (761 aa).

An N-terminal signal peptide occupies residues 1–21; it reads MALARCVLAVILGALSVVARA. Residues 25 to 87 are disordered; sequence SRSPLHRPHP…PPTIPRRCGA (63 aa). A compositionally biased stretch (low complexity) spans 38-48; the sequence is RSQHAHYLPSS. Residues 85–157 form the Kringle domain; that stretch reads CGAGESWGNA…GKVDWGYCDC (73 aa). Cystine bridges form between cysteine 85–cysteine 157, cysteine 101–cysteine 141, cysteine 130–cysteine 155, cysteine 191–cysteine 255, cysteine 204–cysteine 265, cysteine 235–cysteine 245, cysteine 298–cysteine 361, cysteine 311–cysteine 371, cysteine 341–cysteine 351, cysteine 411–cysteine 475, cysteine 424–cysteine 485, cysteine 455–cysteine 465, cysteine 505–cysteine 636, cysteine 547–cysteine 563, cysteine 651–cysteine 717, cysteine 680–cysteine 694, and cysteine 707–cysteine 736. Asparagine 93 carries an N-linked (GlcNAc...) asparagine glycan. SRCR domains follow at residues 166 to 267, 273 to 373, and 386 to 487; these read IRLV…SCVP, IRLA…TCYP, and IRLV…ICDY. Residues 505–516 are zymogen activation region; sequence CGLRLLHRRQKR. Residues 517–760 form the Peptidase S1 domain; sequence IIGGNNSLRG…FVPWIKSVTS (244 aa). Asparagine 521 is a glycosylation site (N-linked (GlcNAc...) asparagine). The active-site Charge relay system is the histidine 562. N-linked (GlcNAc...) asparagine glycosylation occurs at asparagine 569. The Charge relay system role is filled by aspartate 612. The active-site Charge relay system is the serine 711.

This sequence belongs to the peptidase S1 family. Most abundant in cerebral cortex, hippocampus and amygdala.

Its subcellular location is the secreted. Plays a role in neuronal plasticity and the proteolytic action may subserve structural reorganizations associated with learning and memory operations. This Mus musculus (Mouse) protein is Neurotrypsin (Prss12).